The sequence spans 170 residues: ATP synthase subunit b (170 aa).

The helical transmembrane segment at 11 to 31 (AFTFGDAFFTLFAFAILLVLI) threads the bilayer.

It belongs to the ATPase B chain family. F-type ATPases have 2 components, F(1) - the catalytic core - and F(0) - the membrane proton channel. F(1) has five subunits: alpha(3), beta(3), gamma(1), delta(1), epsilon(1). F(0) has three main subunits: a(1), b(2) and c(10-14). The alpha and beta chains form an alternating ring which encloses part of the gamma chain. F(1) is attached to F(0) by a central stalk formed by the gamma and epsilon chains, while a peripheral stalk is formed by the delta and b chains.

The protein resides in the cell membrane. Its function is as follows. F(1)F(0) ATP synthase produces ATP from ADP in the presence of a proton or sodium gradient. F-type ATPases consist of two structural domains, F(1) containing the extramembraneous catalytic core and F(0) containing the membrane proton channel, linked together by a central stalk and a peripheral stalk. During catalysis, ATP synthesis in the catalytic domain of F(1) is coupled via a rotary mechanism of the central stalk subunits to proton translocation. Functionally, component of the F(0) channel, it forms part of the peripheral stalk, linking F(1) to F(0). This Listeria monocytogenes serotype 4b (strain F2365) protein is ATP synthase subunit b.